Reading from the N-terminus, the 264-residue chain is Hydroxyethylthiazole kinase (264 aa).

Methionine 45 lines the substrate pocket. Arginine 121 and serine 167 together coordinate ATP. Glycine 194 contributes to the substrate binding site.

This sequence belongs to the Thz kinase family. It depends on Mg(2+) as a cofactor.

It carries out the reaction 5-(2-hydroxyethyl)-4-methylthiazole + ATP = 4-methyl-5-(2-phosphooxyethyl)-thiazole + ADP + H(+). It functions in the pathway cofactor biosynthesis; thiamine diphosphate biosynthesis; 4-methyl-5-(2-phosphoethyl)-thiazole from 5-(2-hydroxyethyl)-4-methylthiazole: step 1/1. Catalyzes the phosphorylation of the hydroxyl group of 4-methyl-5-beta-hydroxyethylthiazole (THZ). The sequence is that of Hydroxyethylthiazole kinase from Aliivibrio salmonicida (strain LFI1238) (Vibrio salmonicida (strain LFI1238)).